Reading from the N-terminus, the 328-residue chain is MAFVARQTFEYQMPSTWYPGHMNKTLKRLKNLTSSNDIFVEVRDARIPLTSRNYVMEDFLNKKNRIIVYNKCDLADTFHTKAKVSKHRIQNLAQQFQNVECWFKETSTPEKSAFITPYVSKAPYFAKELLRLIRTLVDQASANGRVYVYFVGMPNTGKSSILNSLRNVALRKSKSAIVGNYPGVTKRISEIVRLFNDMDVYMLDTPGIMTPSITKPEDMLKLSLVGCVKEGIVHPVTVVDYLLFHLNRIDPSLYSKWSLPTNDVDEFLQNTAYKARKLTKGGFDENFVSNYVIQQYRIGRLGRFQLDTIDKNELLIRLHNEQNKKNAK.

One can recognise a CP-type G domain in the interval 23–211 (NKTLKRLKNL…MLDTPGIMTP (189 aa)). Residues 70–73 (NKCD), 155–160 (NTGKSS), and Gly-207 each bind GTP.

It belongs to the TRAFAC class YlqF/YawG GTPase family. MTG1 subfamily.

It is found in the mitochondrion inner membrane. In terms of biological role, mitochondrial GTPase involved in assembly of the large ribosomal subunit. Plays a role in expression of the mitochondrial translational machinery. The polypeptide is Mitochondrial GTPase 1 (mtg1) (Schizosaccharomyces pombe (strain 972 / ATCC 24843) (Fission yeast)).